The primary structure comprises 465 residues: GTPase Der (465 aa).

EngA-type G domains are found at residues 3-166 and 184-358; these read FLVA…LNEY and IHFS…ACAN. GTP contacts are provided by residues 9-16, 56-60, 118-121, 190-197, 237-241, and 302-305; these read GRANVGKS, DTGGI, NKVD, GRPNVGKS, DTAGV, and NKWD. In terms of domain architecture, KH-like spans 359 to 443; the sequence is KKITTADATR…PIVFEFKQSE (85 aa). The disordered stretch occupies residues 446 to 465; that stretch reads FADRKNKRSKDEGSKSKKVK.

The protein belongs to the TRAFAC class TrmE-Era-EngA-EngB-Septin-like GTPase superfamily. EngA (Der) GTPase family. Associates with the 50S ribosomal subunit.

In terms of biological role, GTPase that plays an essential role in the late steps of ribosome biogenesis. The chain is GTPase Der from Francisella tularensis subsp. novicida (strain U112).